Consider the following 420-residue polypeptide: Glycerol-3-phosphate dehydrogenase [NAD(+)] (420 aa).

Residues 16–21 (GSGNWG), phenylalanine 48, and phenylalanine 119 contribute to the NAD(+) site. Lysine 142 is a substrate binding site. Position 175 (alanine 175) interacts with NAD(+). Positions 190 to 217 (YDPPPMDNSRAPTPRSNSPANGNGIAPL) are disordered. Over residues 199–210 (RAPTPRSNSPAN) the composition is skewed to polar residues. The Proton acceptor role is filled by lysine 278. Positions 344 and 373 each coordinate NAD(+). A substrate-binding site is contributed by 344–345 (RN).

This sequence belongs to the NAD-dependent glycerol-3-phosphate dehydrogenase family.

It carries out the reaction sn-glycerol 3-phosphate + NAD(+) = dihydroxyacetone phosphate + NADH + H(+). This Colletotrichum gloeosporioides (Anthracnose fungus) protein is Glycerol-3-phosphate dehydrogenase [NAD(+)].